The primary structure comprises 303 residues: Proline dehydrogenase 2 (303 aa).

Residue K96 participates in substrate binding. D130 is a catalytic residue. FAD is bound by residues M131 and Q159. The active site involves R180. FAD is bound by residues 183–185 (KGA) and 222–223 (TH). 284 to 285 (RR) contacts substrate.

Belongs to the proline dehydrogenase family. The cofactor is FAD.

It carries out the reaction L-proline + a quinone = (S)-1-pyrroline-5-carboxylate + a quinol + H(+). Its pathway is amino-acid degradation; L-proline degradation into L-glutamate; L-glutamate from L-proline: step 1/2. Functionally, converts proline to delta-1-pyrroline-5-carboxylate. Important for the use of proline as a sole carbon and energy source or a sole nitrogen source. The protein is Proline dehydrogenase 2 of Bacillus subtilis (strain 168).